Reading from the N-terminus, the 414-residue chain is MHYCVLSTFLLLHLVPVALSLSTCSTLDMDQFMRKRIEAIRGQILSKLKLTSPPEDYPEPDEVPPEVISIYNSTRDLLQEKASRRAAACERERSDEEYYAKEVYKIDMPSHLPSENAIPPTFYRPYFRIVRFDVSTMEKNASNLVKAEFRVFRLQNPKARVAEQRIELYQILKSKDLTSPTQRYIDSKVVKTRAEGEWLSFDVTDAVQEWLHHKDRNLGFKISLHCPCCTFVPSNNYIIPNKSEELEARFAGIDGTSTYASGDQKTIKSTRKKTSGKTPHLLLMLLPSYRLESQQSSRRKKRALDAAYCFRNVQDNCCLRPLYIDFKRDLGWKWIHEPKGYNANFCAGACPYLWSSDTQHTKVLSLYNTINPEASASPCCVSQDLEPLTILYYIGNTPKIEQLSNMIVKSCKCS.

The first 20 residues, 1–20 (MHYCVLSTFLLLHLVPVALS), serve as a signal peptide directing secretion. Asn72, Asn140, and Asn241 each carry an N-linked (GlcNAc...) asparagine glycan. Disulfide bonds link Cys309–Cys318, Cys317–Cys380, Cys346–Cys411, and Cys350–Cys413.

Belongs to the TGF-beta family. In terms of assembly, interacts with the serine proteases, HTRA1 and HTRA3. Interacts with ASPN. Interacts with MFAP5. As to quaternary structure, interacts with Transforming growth factor beta-2 (TGF-beta-2) chain; interaction is non-covalent and maintains (TGF-beta-2) in a latent state. Interacts with LRRC32/GARP; leading to regulate activation of TGF-beta-2. Interacts with NREP; the interaction results in a decrease in TGFB2 autoinduction. Transforming growth factor beta-2: Homodimer; disulfide-linked. Transforming growth factor beta-2: Interacts with TGF-beta receptors (TGFBR1 and TGFBR2), leading to signal transduction. In terms of processing, the precursor proprotein is cleaved in the Golgi apparatus to form Transforming growth factor beta-2 (TGF-beta-2) and Latency-associated peptide (LAP) chains, which remain non-covalently linked, rendering TGF-beta-2 inactive.

The protein resides in the secreted. It is found in the extracellular space. Its subcellular location is the extracellular matrix. In terms of biological role, precursor of the Latency-associated peptide (LAP) and Transforming growth factor beta-2 (TGF-beta-2) chains, which constitute the regulatory and active subunit of TGF-beta-2, respectively. Required to maintain the Transforming growth factor beta-2 (TGF-beta-2) chain in a latent state during storage in extracellular matrix. Associates non-covalently with TGF-beta-2 and regulates its activation via interaction with 'milieu molecules', such as LTBP1 and LRRC32/GARP, that control activation of TGF-beta-2. Functionally, multifunctional protein that regulates various processes such as angiogenesis and heart development. Activation into mature form follows different steps: following cleavage of the proprotein in the Golgi apparatus, Latency-associated peptide (LAP) and Transforming growth factor beta-2 (TGF-beta-2) chains remain non-covalently linked rendering TGF-beta-2 inactive during storage in extracellular matrix. At the same time, LAP chain interacts with 'milieu molecules', such as LTBP1 and LRRC32/GARP, that control activation of TGF-beta-2 and maintain it in a latent state during storage in extracellular milieus. Once activated following release of LAP, TGF-beta-2 acts by binding to TGF-beta receptors (TGFBR1 and TGFBR2), which transduce signal. This is Transforming growth factor beta-2 proprotein (Tgfb2) from Mus musculus (Mouse).